Here is a 586-residue protein sequence, read N- to C-terminus: Asparagine synthetase [glutamine-hydrolyzing] (586 aa).

C2 functions as the For GATase activity in the catalytic mechanism. The 184-residue stretch at 2-185 (CGILAVLGCS…PGHLYSSKSG (184 aa)) folds into the Glutamine amidotransferase type-2 domain. L-glutamine is bound by residues 50–54 (RLAII), 75–77 (NGE), and D98. An Asparagine synthetase domain is found at 194-517 (PPWFNESVPS…PQNSARLTVP (324 aa)). Residues L232, V268, and 342-343 (SG) each bind ATP.

It belongs to the asparagine synthetase family.

It catalyses the reaction L-aspartate + L-glutamine + ATP + H2O = L-asparagine + L-glutamate + AMP + diphosphate + H(+). It functions in the pathway amino-acid biosynthesis; L-asparagine biosynthesis; L-asparagine from L-aspartate (L-Gln route): step 1/1. The chain is Asparagine synthetase [glutamine-hydrolyzing] from Brassica oleracea (Wild cabbage).